A 163-amino-acid polypeptide reads, in one-letter code: Nucleotide-binding protein SACE_6882 (163 aa).

This sequence belongs to the YajQ family.

Its function is as follows. Nucleotide-binding protein. The sequence is that of Nucleotide-binding protein SACE_6882 from Saccharopolyspora erythraea (strain ATCC 11635 / DSM 40517 / JCM 4748 / NBRC 13426 / NCIMB 8594 / NRRL 2338).